The primary structure comprises 156 residues: Small ribosomal subunit protein uS7 (156 aa).

It belongs to the universal ribosomal protein uS7 family. As to quaternary structure, part of the 30S ribosomal subunit. Contacts proteins S9 and S11.

One of the primary rRNA binding proteins, it binds directly to 16S rRNA where it nucleates assembly of the head domain of the 30S subunit. Is located at the subunit interface close to the decoding center, probably blocks exit of the E-site tRNA. This Ruegeria pomeroyi (strain ATCC 700808 / DSM 15171 / DSS-3) (Silicibacter pomeroyi) protein is Small ribosomal subunit protein uS7.